We begin with the raw amino-acid sequence, 455 residues long: mRNA cleavage and polyadenylation factor CLP1 (455 aa).

2 residues coordinate ATP: Glu28 and Lys67. The interval 112 to 131 (EAAARNNGGGRSAPHGPRVL) is disordered. 137-142 (GCGRTS) contacts ATP.

It belongs to the Clp1 family. Clp1 subfamily. Component of a pre-mRNA cleavage factor complex. Interacts directly with PCF11.

It is found in the nucleus. Required for endonucleolytic cleavage during polyadenylation-dependent pre-mRNA 3'-end formation. This Pyricularia oryzae (strain 70-15 / ATCC MYA-4617 / FGSC 8958) (Rice blast fungus) protein is mRNA cleavage and polyadenylation factor CLP1.